Here is a 93-residue protein sequence, read N- to C-terminus: UPF0223 protein gbs1030 (93 aa).

This sequence belongs to the UPF0223 family.

The sequence is that of UPF0223 protein gbs1030 from Streptococcus agalactiae serotype III (strain NEM316).